Here is a 22-residue protein sequence, read N- to C-terminus: Superoxide dismutase [Cu-Zn] 2 (22 aa).

The protein belongs to the Cu-Zn superoxide dismutase family. In terms of assembly, homodimer. The cofactor is Cu cation. Zn(2+) serves as cofactor. In terms of tissue distribution, dominant isozyme in roots.

Its subcellular location is the cytoplasm. The catalysed reaction is 2 superoxide + 2 H(+) = H2O2 + O2. Destroys radicals which are normally produced within the cells and which are toxic to biological systems. This chain is Superoxide dismutase [Cu-Zn] 2, found in Picea abies (Norway spruce).